Reading from the N-terminus, the 81-residue chain is Sulfur carrier protein TusA (81 aa).

Cys19 acts as the Cysteine persulfide intermediate in catalysis.

Belongs to the sulfur carrier protein TusA family.

The protein localises to the cytoplasm. Functionally, sulfur carrier protein which probably makes part of a sulfur-relay system. The sequence is that of Sulfur carrier protein TusA from Shewanella baltica (strain OS223).